Consider the following 691-residue polypeptide: Elongation factor G (691 aa).

Residues 8 to 283 enclose the tr-type G domain; it reads KRVRNIGIAA…AVVAYLPAPD (276 aa). GTP is bound by residues 17-24, 81-85, and 135-138; these read AHIDAGKT, DTPGH, and NKMD.

Belongs to the TRAFAC class translation factor GTPase superfamily. Classic translation factor GTPase family. EF-G/EF-2 subfamily.

Its subcellular location is the cytoplasm. Catalyzes the GTP-dependent ribosomal translocation step during translation elongation. During this step, the ribosome changes from the pre-translocational (PRE) to the post-translocational (POST) state as the newly formed A-site-bound peptidyl-tRNA and P-site-bound deacylated tRNA move to the P and E sites, respectively. Catalyzes the coordinated movement of the two tRNA molecules, the mRNA and conformational changes in the ribosome. This chain is Elongation factor G, found in Campylobacter lari (strain RM2100 / D67 / ATCC BAA-1060).